The sequence spans 500 residues: Ferulic acid decarboxylase 1 (500 aa).

3 residues coordinate Mn(2+): Asn-168, His-191, and Glu-233. Prenylated FMN-binding positions include 168-173, 190-191, and Glu-233; these read NWSIAR and QH. Glu-282 serves as the catalytic Proton donor. Lys-391 serves as a coordination point for prenylated FMN.

The protein belongs to the UbiD family. UbiD-like/FDC subfamily. As to quaternary structure, homodimer. May form higher order oligomers. The cofactor is Mn(2+). It depends on prenylated FMN as a cofactor.

It localises to the cytoplasm. It catalyses the reaction (E)-4-coumarate + H(+) = 4-vinylphenol + CO2. It carries out the reaction (E)-cinnamate + H(+) = styrene + CO2. The enzyme catalyses (E)-ferulate + H(+) = 2-methoxy-4-vinylphenol + CO2. In terms of biological role, catalyzes the reversible decarboxylation of aromatic carboxylic acids like ferulic acid, p-coumaric acid or cinnamic acid, producing the corresponding vinyl derivatives 4-vinylphenol, 4-vinylguaiacol, and styrene, respectively, which play the role of aroma metabolites. The chain is Ferulic acid decarboxylase 1 from Aspergillus niger (strain ATCC MYA-4892 / CBS 513.88 / FGSC A1513).